The primary structure comprises 317 residues: Vacuolar arginine/histidine antiporter YPQ2 (317 aa).

Residues 1–13 (MSCSNGIWPTVSN) are Vacuolar-facing. One can recognise a PQ-loop 1 domain in the interval 8-71 (WPTVSNLCGS…AKLTGQLLFQ (64 aa)). Residues 14 to 34 (LCGSLSFFTSVISLFPQIIET) traverse the membrane as a helical segment. Residues 35–39 (YRDKS) are Cytoplasmic-facing. The chain crosses the membrane as a helical span at residues 40–62 (VDGLSPYFLLAWLCGDITSLIGA). Residues 63 to 71 (KLTGQLLFQ) are Vacuolar-facing. The chain crosses the membrane as a helical span at residues 72-94 (ILLAIYFLLNDSFVCGQYYYYGV). Over 95-143 (LHENKLATVGHEPKPLLPELVENGELLREEEDMIQGGSSAESPRSSRRR) the chain is Cytoplasmic. Serine 136 carries the phosphoserine modification. The helical transmembrane segment at 144–164 (SAITAALAIAHTISTASAYPL) threads the bilayer. Over 165-184 (NVGSTQSQVGPPGDGKNSQL) the chain is Vacuolar. The helical transmembrane segment at 185–205 (GTILSWIGASFYVGARIPQLI) threads the bilayer. The 63-residue stretch at 185–247 (GTILSWIGAS…SCRFLDNQNK (63 aa)) folds into the PQ-loop 2 domain. The Cytoplasmic portion of the chain corresponds to 206–215 (KNYNRKSTDG). The chain crosses the membrane as a helical span at residues 216–236 (LSPFLFATTLLCNITYNLSIF). The Vacuolar portion of the chain corresponds to 237 to 249 (TSCRFLDNQNKRE). The helical transmembrane segment at 250–270 (FIVNELPFIFGSAGTIAFDLI) threads the bilayer. The Cytoplasmic segment spans residues 271–317 (YFYQYYILYATDMQLRELERELYSPEEDSAAQLVTERTSLLSGETQT).

The protein belongs to the laat-1 family.

The protein localises to the vacuole membrane. It carries out the reaction L-histidine(out) + L-arginine(in) = L-histidine(in) + L-arginine(out). In terms of biological role, amino acid transporter that moves arginine across the vacuolar membrane. Active during nitrogen starvation when it exports stored vacuolar arginine to the cytosol, for use as a nitrogen source. Has been shown to function as an arginine/histidine antiporter when substrate is present on both sides of the membrane, but may also function as a uniporter. This Saccharomyces cerevisiae (strain ATCC 204508 / S288c) (Baker's yeast) protein is Vacuolar arginine/histidine antiporter YPQ2 (YPQ2).